Reading from the N-terminus, the 434-residue chain is ATP-dependent RNA helicase RhlB (434 aa).

Positions 9-37 (KKFADFPLKPEILAALNENGFEFCTPIQA) match the Q motif motif. A Helicase ATP-binding domain is found at 40-219 (LPILLNAKDI…YDHMNDPEKV (180 aa)). 53-60 (AQTGTGKT) is an ATP binding site. The DEAD box signature appears at 165–168 (DEAD). The region spanning 243–390 (KMRLLLSLIE…VSNYDKDALL (148 aa)) is the Helicase C-terminal domain. Residues 390–434 (LDDIPPPARIHRKPPTSRTRDGGSKGAHRSGGNTSRPPRHRTRRP) form a disordered region.

The protein belongs to the DEAD box helicase family. RhlB subfamily. As to quaternary structure, component of the RNA degradosome, which is a multiprotein complex involved in RNA processing and mRNA degradation.

It localises to the cytoplasm. The enzyme catalyses ATP + H2O = ADP + phosphate + H(+). DEAD-box RNA helicase involved in RNA degradation. Has RNA-dependent ATPase activity and unwinds double-stranded RNA. The protein is ATP-dependent RNA helicase RhlB of Shewanella frigidimarina (strain NCIMB 400).